Here is a 234-residue protein sequence, read N- to C-terminus: Protein XNDC1N (234 aa).

This Homo sapiens (Human) protein is Protein XNDC1N.